The chain runs to 91 residues: Small ribosomal subunit protein uS19 (91 aa).

Belongs to the universal ribosomal protein uS19 family.

Functionally, protein S19 forms a complex with S13 that binds strongly to the 16S ribosomal RNA. The sequence is that of Small ribosomal subunit protein uS19 from Aliarcobacter butzleri (strain RM4018) (Arcobacter butzleri).